A 229-amino-acid chain; its full sequence is Ribonuclease 3 (229 aa).

Residues L7–G132 enclose the RNase III domain. Residue E45 coordinates Mg(2+). Residue D49 is part of the active site. Residues D118 and E121 each contribute to the Mg(2+) site. Residue E121 is part of the active site. Residues D157–A226 enclose the DRBM domain.

It belongs to the ribonuclease III family. Homodimer. It depends on Mg(2+) as a cofactor.

Its subcellular location is the cytoplasm. The enzyme catalyses Endonucleolytic cleavage to 5'-phosphomonoester.. Functionally, digests double-stranded RNA. Involved in the processing of primary rRNA transcript to yield the immediate precursors to the large and small rRNAs (23S and 16S). Processes some mRNAs, and tRNAs when they are encoded in the rRNA operon. Processes pre-crRNA and tracrRNA of type II CRISPR loci if present in the organism. The protein is Ribonuclease 3 of Cereibacter sphaeroides (strain ATCC 17025 / ATH 2.4.3) (Rhodobacter sphaeroides).